A 592-amino-acid polypeptide reads, in one-letter code: Potassium-transporting ATPase potassium-binding subunit (592 aa).

10 consecutive transmembrane segments (helical) span residues I7–I27, L60–L80, A132–I152, L175–I195, L279–F299, W310–F330, G409–G429, I449–A469, V513–I533, and L556–A576.

This sequence belongs to the KdpA family. As to quaternary structure, the system is composed of three essential subunits: KdpA, KdpB and KdpC.

Its subcellular location is the cell inner membrane. Its function is as follows. Part of the high-affinity ATP-driven potassium transport (or Kdp) system, which catalyzes the hydrolysis of ATP coupled with the electrogenic transport of potassium into the cytoplasm. This subunit binds the periplasmic potassium ions and delivers the ions to the membrane domain of KdpB through an intramembrane tunnel. In Dechloromonas aromatica (strain RCB), this protein is Potassium-transporting ATPase potassium-binding subunit.